The primary structure comprises 1203 residues: Partitioning defective 3 homolog B (1203 aa).

2 disordered regions span residues 79 to 104 and 138 to 162; these read FDEQEPLQKTESPGGNPADRQSPDAF and RRSSDPAPGPHADAQPSTASLSGQS. The residue at position 100 (Ser100) is a Phosphoserine. The span at 152–162 shows a compositional bias: polar residues; it reads QPSTASLSGQS. A PDZ 1 domain is found at 201–289; the sequence is TRAVEISGEG…SPSVILHVLL (89 aa). Residues 334–374 form a disordered region; it reads TRASSPEGEEPASPQQSKSPRVPRLGRKPSSPSLSPLMGFG. Phosphoserine occurs at positions 346, 352, and 368. 2 consecutive PDZ domains span residues 383–468 and 496–585; these read KIDL…VIAR and TLEI…GMIQ. Phosphoserine is present on residues Ser635, Ser710, Ser728, Ser730, Ser746, Ser749, and Ser801. Basic and acidic residues predominate over residues 718 to 732; that stretch reads GKVQSLADRRSDSPG. Residues 718-743 form a disordered region; it reads GKVQSLADRRSDSPGKDFGPTLGLKK. Disordered regions lie at residues 787 to 927, 968 to 994, and 1050 to 1203; these read KSYD…EKQA, VFRSPSPLRAGPLAYPRDGRPLSPDHL, and RPSD…TAAV. The residue at position 810 (Thr810) is a Phosphothreonine. Residues 827–842 show a composition bias toward basic and acidic residues; that stretch reads VENKAKNIKKTKEKEK. Positions 843–854 are enriched in basic residues; it reads KKGKGKLKVKEK. 4 stretches are compositionally biased toward basic and acidic residues: residues 855–865, 881–893, 906–927, and 984–994; these read KLKEEHEDAER, KKDDKVGKAEQKG, ERMKEERERIGAKHQELREKQA, and RDGRPLSPDHL. A phosphoserine mark is found at Ser1088 and Ser1182.

Belongs to the PAR3 family. As to quaternary structure, interacts with PARD6B. Interacts with INSC/inscuteable.

It is found in the endomembrane system. Its subcellular location is the cell junction. It localises to the tight junction. Functionally, putative adapter protein involved in asymmetrical cell division and cell polarization processes. May play a role in the formation of epithelial tight junctions. This is Partitioning defective 3 homolog B (Pard3b) from Mus musculus (Mouse).